The primary structure comprises 1134 residues: Centrosomal protein of 131 kDa (1134 aa).

Disordered stretches follow at residues 111-131 (NSSE…EEGE), 168-208 (DLPG…PLTL), 286-306 (ESSK…APSS), 425-455 (VGKK…TINP), and 492-528 (DQKQ…EDSR). Positions 180–196 (MHADLDSSDCDNDKQEV) are enriched in basic and acidic residues. Residues 494–504 (KQYDGKHKPGL) are compositionally biased toward basic and acidic residues. The segment covering 513–522 (NDTASQLSLK) has biased composition (polar residues). The stretch at 732-1131 (LESQNQAWEH…AVIRQQRKDY (400 aa)) forms a coiled coil.

The protein belongs to the CEP131 family. Expressed in chordotonal (Ch) neuronal precursors. Expressed in ciliated cells, like sensory neurons and spermatids.

The protein resides in the cytoplasm. It is found in the cytoskeleton. It localises to the microtubule organizing center. The protein localises to the centrosome. Its subcellular location is the cilium basal body. The protein resides in the centriole. Cilium-specific protein with a role in cilium/flagellum formation. May be involved in transport of components into the growing cilium. In germ cells and sensory neurons, plays a role with Cby in the building of the transition zone necessary for the formation of the ciliary cap and for the correct elongation of the axoneme. In Drosophila melanogaster (Fruit fly), this protein is Centrosomal protein of 131 kDa.